The following is a 221-amino-acid chain: Ubiquitin-conjugating enzyme E2 S (221 aa).

Residues 11–157 (QVLRLVYKEV…AHLLTEIHAM (147 aa)) enclose the UBC core domain. Cysteine 95 acts as the Glycyl thioester intermediate in catalysis. The segment at 158–221 (GGTSGAPQEP…TDKKRALRRL (64 aa)) is disordered. Low complexity predominate over residues 193 to 206 (GTGTNNSNISNTNI). The segment covering 208 to 221 (AKKKTDKKRALRRL) has biased composition (basic residues).

It belongs to the ubiquitin-conjugating enzyme family.

It catalyses the reaction S-ubiquitinyl-[E1 ubiquitin-activating enzyme]-L-cysteine + [E2 ubiquitin-conjugating enzyme]-L-cysteine = [E1 ubiquitin-activating enzyme]-L-cysteine + S-ubiquitinyl-[E2 ubiquitin-conjugating enzyme]-L-cysteine.. It participates in protein modification; protein ubiquitination. In terms of biological role, catalyzes the covalent attachment of ubiquitin to other proteins. Acts as an essential factor of the anaphase promoting complex/cyclosome (APC/C), a cell cycle-regulated ubiquitin ligase that controls progression through mitosis. Acts by specifically elongating 'Lys-11'-linked polyubiquitin chains initiated by the E2 enzyme ube2c/ubch10 on APC/C substrates, enhancing the degradation of APC/C substrates by the proteasome and promoting mitotic exit. This is Ubiquitin-conjugating enzyme E2 S (ube2s) from Danio rerio (Zebrafish).